A 1083-amino-acid polypeptide reads, in one-letter code: MPRRDDIKKILLIGSGPIVIGQACEFDYSGTQACKALREEGYEVVLVNSNPATIMTDPATADATYIEPLTWQIVEKVIAKERPDALLPTLGGQTGLNVAMDLDANGVLEKYGVEMIAANAKVIAKAEEREQFKQAMDKIGLDVCKGFTVRTLADARKALAEVGLPAVVRPSFTMGGSGSAIAYNKDDFDSLVQNGLDQSPVTEVLIEESIIGWKEYEMEVMRDCDDNVVIICAIENFDPMGVHTGDSITVAPAQTLSDKEYQRMRDASLAVIREIGVETGGSNIQFAIEPDTGRMIVIEMNPRVSRSSALASKATGFPIAKIAAKLAVGYRLWELPNDITQKTKACFEPTIDYVVTKMPRFAFEKFPEADATLTTQMKSVGETMSIGRTFQESFQKALRGLEVGAFGFGSDPKDLWGTEDQPSRDEIRAKLSTPGSERVFYIRYAFKDGMTAAEIHSLTNIDPWFLDHLQQLIETEDNLRAIGKLDAIDVDTMRDAKRRGFSDRQIATITSKTESQVRAKRLEMGIRPVYKSVDTCAAEFEAFTPYYYSTYESETEVPAKGDKKRVVILGGGPNRIGQGIEFDYCCCHASFALQEMGIESIMVNSNPETVSTDYDTSDILFFEPLTIEDVLNICDAMQPDGVIVQFGGQTPLNLARGLEQAGVPIIGTSVDTIDTAEDRELFSSLIDELGLRQPPSGIARNMDEARVEAKRIGYPALVRPSFVLGGRAMEICYDHSQFARYVAEAFIVADGQPVLIDRFLEDATEVDVDAISDGNDCVIMGIMEHIEEAGVHSGDSACCIPPFSLTQPVLAEIRDATRKLAARLNVVGLMNIQFAVKMEGTQPTLYILEVNPRASRTVPFVAKATGVPVANLATKVMAGKTLKELNVTEEPIPRHVSIKESVLPFRKFAGVDIVLGPEMRSTGEVMGVSELFSIAFAKSQLAAGTVLPESGKIFLSLSANHKEAAESLGKSLIELGFELLATEGTAVRLEANGIAVTRVKKLSEGHPNLIDYLKNDDVQLILNTPSGKGARTDEGKIRAAGVQHGVPCITTLAAAEAAVRAMVAMRDTPMEVESLQRRYAQNV.

The carboxyphosphate synthetic domain stretch occupies residues 1 to 402 (MPRRDDIKKI…SFQKALRGLE (402 aa)). ATP contacts are provided by Arg-129, Arg-169, Gly-175, Gly-176, Glu-208, Ile-210, Glu-215, Gly-241, Val-242, His-243, Gln-285, and Glu-299. One can recognise an ATP-grasp 1 domain in the interval 133-328 (KQAMDKIGLD…IAKIAAKLAV (196 aa)). Mg(2+) is bound by residues Gln-285, Glu-299, and Asn-301. Gln-285, Glu-299, and Asn-301 together coordinate Mn(2+). The interval 403–557 (VGAFGFGSDP…YSTYESETEV (155 aa)) is oligomerization domain. Residues 558–944 (PAKGDKKRVV…AFAKSQLAAG (387 aa)) form a carbamoyl phosphate synthetic domain region. The ATP-grasp 2 domain occupies 683 to 878 (SSLIDELGLR…VANLATKVMA (196 aa)). The ATP site is built by Arg-719, Arg-758, Leu-760, Glu-765, Gly-790, Val-791, His-792, Ser-793, Gln-833, and Glu-849. 3 residues coordinate Mg(2+): Gln-833, Glu-849, and Asn-851. Mn(2+) contacts are provided by Gln-833, Glu-849, and Asn-851. The MGS-like domain maps to 945-1083 (TVLPESGKIF…SLQRRYAQNV (139 aa)). The segment at 945–1083 (TVLPESGKIF…SLQRRYAQNV (139 aa)) is allosteric domain.

Belongs to the CarB family. In terms of assembly, composed of two chains; the small (or glutamine) chain promotes the hydrolysis of glutamine to ammonia, which is used by the large (or ammonia) chain to synthesize carbamoyl phosphate. Tetramer of heterodimers (alpha,beta)4. The cofactor is Mg(2+). It depends on Mn(2+) as a cofactor.

The enzyme catalyses hydrogencarbonate + L-glutamine + 2 ATP + H2O = carbamoyl phosphate + L-glutamate + 2 ADP + phosphate + 2 H(+). It catalyses the reaction hydrogencarbonate + NH4(+) + 2 ATP = carbamoyl phosphate + 2 ADP + phosphate + 2 H(+). It functions in the pathway amino-acid biosynthesis; L-arginine biosynthesis; carbamoyl phosphate from bicarbonate: step 1/1. It participates in pyrimidine metabolism; UMP biosynthesis via de novo pathway; (S)-dihydroorotate from bicarbonate: step 1/3. Its function is as follows. Large subunit of the glutamine-dependent carbamoyl phosphate synthetase (CPSase). CPSase catalyzes the formation of carbamoyl phosphate from the ammonia moiety of glutamine, carbonate, and phosphate donated by ATP, constituting the first step of 2 biosynthetic pathways, one leading to arginine and/or urea and the other to pyrimidine nucleotides. The large subunit (synthetase) binds the substrates ammonia (free or transferred from glutamine from the small subunit), hydrogencarbonate and ATP and carries out an ATP-coupled ligase reaction, activating hydrogencarbonate by forming carboxy phosphate which reacts with ammonia to form carbamoyl phosphate. This Rhodopirellula baltica (strain DSM 10527 / NCIMB 13988 / SH1) protein is Carbamoyl phosphate synthase large chain.